A 367-amino-acid chain; its full sequence is Apolipoprotein A-V (367 aa).

An N-terminal signal peptide occupies residues 1-20; the sequence is MVAVLTWALALLSAFATAQT. Ser-56 carries the phosphoserine modification.

Belongs to the apolipoprotein A1/A4/E family. As to quaternary structure, interacts with GPIHBP1. Interacts with SORL1; this interaction leads to APOA5 internalization and sorting either to lysosomes and degradation, or to the trans-Golgi network. Post-translationally, phosphorylated by FAM20C in the extracellular medium.

The protein localises to the secreted. The protein resides in the early endosome. It is found in the late endosome. Its subcellular location is the golgi apparatus. It localises to the trans-Golgi network. Functionally, minor apolipoprotein mainly associated with HDL and to a lesser extent with VLDL. May also be associated with chylomicrons. Important determinant of plasma triglyceride (TG) levels by both being a potent stimulator of apo-CII lipoprotein lipase (LPL) TG hydrolysis and an inhibitor of the hepatic VLDL-TG production rate (without affecting the VLDL-apoB production rate). Activates poorly lecithin:cholesterol acyltransferase (LCAT) and does not enhance efflux of cholesterol from macrophages. Binds heparin. This chain is Apolipoprotein A-V (APOA5), found in Phoca vitulina (Harbor seal).